The primary structure comprises 524 residues: Translation initiation factor eIF2B subunit delta (524 aa).

The disordered stretch occupies residues 1–155 (MAAVAVAVRE…EHTPADDPTL (155 aa)). Ala2 carries the N-acetylalanine modification. Composition is skewed to basic and acidic residues over residues 8 to 20 (VREE…KTEL) and 31 to 40 (LTQEEKLQLR). Ser12 carries the post-translational modification Phosphoserine. Over residues 41–51 (KEKKQQKKKRK) the composition is skewed to basic residues. Residue Thr86 is modified to Phosphothreonine. Positions 96 to 121 (SKAELRAERRAKQEAERALKQARKGE) are enriched in basic and acidic residues. Positions 130-140 (CPSTAGETTSG) are enriched in polar residues. The interval 171 to 180 (RKDYGSKVSL) is may bind the chemical integrated stress response (ISR) inhibitor ISRIB.

It belongs to the eIF-2B alpha/beta/delta subunits family. Component of the translation initiation factor 2B (eIF2B) complex which is a heterodecamer of two sets of five different subunits: alpha, beta, gamma, delta and epsilon. Subunits alpha, beta and delta comprise a regulatory subcomplex and subunits epsilon and gamma comprise a catalytic subcomplex. Within the complex, the hexameric regulatory complex resides at the center, with the two heterodimeric catalytic subcomplexes bound on opposite sides.

Its subcellular location is the cytoplasm. It localises to the cytosol. With respect to regulation, activated by the chemical integrated stress response (ISR) inhibitor ISRIB which stimulates guanine nucleotide exchange factor activity for both phosphorylated and unphosphorylated eIF2. Functionally, acts as a component of the translation initiation factor 2B (eIF2B) complex, which catalyzes the exchange of GDP for GTP on eukaryotic initiation factor 2 (eIF2) gamma subunit. Its guanine nucleotide exchange factor activity is repressed when bound to eIF2 complex phosphorylated on the alpha subunit, thereby limiting the amount of methionyl-initiator methionine tRNA available to the ribosome and consequently global translation is repressed. The sequence is that of Translation initiation factor eIF2B subunit delta (Eif2b4) from Mus musculus (Mouse).